The sequence spans 556 residues: Glutamine--tRNA ligase (556 aa).

A 'HIGH' region motif is present at residues 34–44 (PEPNGYLHIGH). ATP contacts are provided by residues 35 to 37 (EPN) and 41 to 47 (HIGHAKS). L-glutamine-binding residues include Asp67 and Tyr212. ATP contacts are provided by residues Thr231, 261-262 (RL), and 269-271 (MSK). The 'KMSKS' region motif lies at 268-272 (VMSKR).

It belongs to the class-I aminoacyl-tRNA synthetase family. As to quaternary structure, monomer.

The protein localises to the cytoplasm. It catalyses the reaction tRNA(Gln) + L-glutamine + ATP = L-glutaminyl-tRNA(Gln) + AMP + diphosphate. This chain is Glutamine--tRNA ligase, found in Vibrio parahaemolyticus serotype O3:K6 (strain RIMD 2210633).